The chain runs to 172 residues: ATP synthase subunit b (172 aa).

Residues 27–47 (LAIVIFGLYKFLPPFVGGILE) form a helical membrane-spanning segment.

This sequence belongs to the ATPase B chain family. As to quaternary structure, F-type ATPases have 2 components, F(1) - the catalytic core - and F(0) - the membrane proton channel. F(1) has five subunits: alpha(3), beta(3), gamma(1), delta(1), epsilon(1). F(0) has four main subunits: a(1), b(1), b'(1) and c(10-14). The alpha and beta chains form an alternating ring which encloses part of the gamma chain. F(1) is attached to F(0) by a central stalk formed by the gamma and epsilon chains, while a peripheral stalk is formed by the delta, b and b' chains.

The protein resides in the cellular thylakoid membrane. In terms of biological role, f(1)F(0) ATP synthase produces ATP from ADP in the presence of a proton or sodium gradient. F-type ATPases consist of two structural domains, F(1) containing the extramembraneous catalytic core and F(0) containing the membrane proton channel, linked together by a central stalk and a peripheral stalk. During catalysis, ATP synthesis in the catalytic domain of F(1) is coupled via a rotary mechanism of the central stalk subunits to proton translocation. Component of the F(0) channel, it forms part of the peripheral stalk, linking F(1) to F(0). In Prochlorococcus marinus (strain MIT 9303), this protein is ATP synthase subunit b.